Reading from the N-terminus, the 214-residue chain is Type IV major pilin protein PilE1 (214 aa).

A propeptide spans 1-7 (MNTLQKG) (leader sequence). Residue Phe8 is modified to N-methylphenylalanine. The chain crosses the membrane as a helical span at residues 8–28 (FTLIELMIVIAIVGILAAVAL). An intrachain disulfide couples Cys127 to Cys161. A disordered region spans residues 182–214 (AGTDAVTADTTGKDKEIDTKHLPSTCRDKSSAE). Residues 192-214 (TGKDKEIDTKHLPSTCRDKSSAE) show a composition bias toward basic and acidic residues.

The protein belongs to the N-Me-Phe pilin family. The pili are polar flexible filaments of about 5.4 nanometers diameter and 2.5 micrometers average length; they consist of only a single polypeptide chain arranged in a helical configuration of five subunits per turn in the assembled pilus.

The protein localises to the fimbrium. It is found in the membrane. Its function is as follows. Major component of the type IV pilus (T4P) that plays a role in cellular adherence, microcolony formation, resistance to neutrophil mediated killing, twitching motility as well as transformation. Mediates the attachment and the formation of bacterial microcolonies on host epithelial cells. Mechanistically, pili retractation induces host NF-kappa-B activation in infected cells, which is temporally associated with the formation of gonococcal microcolonies. The protein is Type IV major pilin protein PilE1 (pilE1) of Neisseria gonorrhoeae.